Here is a 1651-residue protein sequence, read N- to C-terminus: A.superbus venom factor 2 (1651 aa).

Positions 1-22 (MEGMALYLVAALLIGFPGSSHG) are cleaved as a signal peptide. Asn-189 carries an N-linked (GlcNAc...) asparagine glycan. Residues Pro-519, Asp-542, Val-543, and Asp-545 each coordinate Mg(2+). Intrachain disulfides connect Cys-547/Cys-808, Cys-616/Cys-651, Cys-684/Cys-711, Cys-685/Cys-718, Cys-698/Cys-719, Cys-864/Cys-1501, Cys-1346/Cys-1477, Cys-1377/Cys-1446, Cys-1494/Cys-1499, Cys-1506/Cys-1578, Cys-1525/Cys-1649, and Cys-1625/Cys-1634. The propeptide occupies 657–739 (RRRRSSVLLL…QRESELFLAR (83 aa)). Positions 661–739 (SSVLLLDSKA…QRESELFLAR (79 aa)) are C3a-like domain. Residues 684 to 719 (CCEDGMHENPMGYTCEKRAKYTQEGDACKAAFLECC) form the Anaphylatoxin-like domain. The factor B binding site stretch occupies residues 743-754 (EDEFFEEDNIIS). A propeptide spanning residues 992–1269 (HLIITPSGSG…VMVFQALAEY (278 aa)) is cleaved from the precursor. The C3d-like domain stretch occupies residues 992–1269 (HLIITPSGSG…VMVFQALAEY (278 aa)). The interval 1197–1259 (VLMAASTGRD…GGTYGQTQAT (63 aa)) is factor H binding site. Residues Asn-1282 and Asn-1352 are each glycosylated (N-linked (GlcNAc...) asparagine). The 144-residue stretch at 1506-1649 (CSLLNQQKKI…LSNTLTIFGC (144 aa)) folds into the NTR domain.

It belongs to the venom complement C3 homolog family. As to quaternary structure, heterotrimer of alpha, beta and gamma chains; disulfide-linked. Is active with factor B in the presence of factor D. Post-translationally, first processed by the removal of 4 Arg residues by furin-type protease, forming two chains, alpha and gamma/beta precursor, linked by a disulfide bond. This mature AVF is composed of three chains: alpha, gamma and beta. As to expression, expressed by the venom gland.

Its subcellular location is the secreted. Complement-activating protein in snake venom. It is a structural and functional analog of complement component C3b, the activated form of C3. It binds factor B (CFB), which is subsequently cleaved by factor D (CFD) to form the bimolecular complex AVF/Bb. AVF/Bb is a C3 convertase that cleaves complement component C3, but not C5 (as do CVF/Bb). The chain is A.superbus venom factor 2 from Austrelaps superbus (Lowland copperhead snake).